Reading from the N-terminus, the 679-residue chain is Glycine--tRNA ligase beta subunit (679 aa).

This sequence belongs to the class-II aminoacyl-tRNA synthetase family. In terms of assembly, tetramer of two alpha and two beta subunits.

Its subcellular location is the cytoplasm. It carries out the reaction tRNA(Gly) + glycine + ATP = glycyl-tRNA(Gly) + AMP + diphosphate. This is Glycine--tRNA ligase beta subunit from Streptococcus agalactiae serotype V (strain ATCC BAA-611 / 2603 V/R).